Consider the following 1088-residue polypeptide: Platelet-derived growth factor receptor alpha (1088 aa).

A signal peptide spans 1–23 (MGTSQAFLVLSCLLTGPSLIVCQ). 5 Ig-like C2-type domains span residues 24–112 (LLLP…SEIE), 116–200 (IYIY…FKTS), 201–305 (EFNV…KTVT), 318–409 (PTFG…FELS), and 413–516 (PASI…LKLV). Residues 24-527 (LLLPSILPNE…PSLRSELTVA (504 aa)) lie on the Extracellular side of the membrane. Cysteines 48 and 99 form a disulfide. N-linked (GlcNAc...) asparagine glycosylation is found at N75, N102, and N178. 2 cysteine pairs are disulfide-bonded: C149/C188 and C234/C289. N352, N358, N457, and N467 each carry an N-linked (GlcNAc...) asparagine glycan. C434 and C500 are oxidised to a cystine. A helical membrane pass occupies residues 528-548 (AAVLVLLVIVIVSLIVLVVIW). Residues 549–1088 (KQKPRYEIRW…SSDLVEDSFL (540 aa)) are Cytoplasmic-facing. Phosphotyrosine; by autocatalysis occurs at positions 571 and 573. The region spanning 592 to 953 (LVLGRILGSG…HLSEIVENLL (362 aa)) is the Protein kinase domain. ATP is bound by residues 598–606 (LGSGAFGKV) and K626. Residues Y719, Y730, Y741, Y753, Y761, and Y767 each carry the phosphotyrosine; by autocatalysis modification. Residue D817 is the Proton acceptor of the active site. Phosphotyrosine; by autocatalysis is present on residues Y848, Y987, and Y1017. The interval 1017–1088 (YIIPLPDIDP…SSDLVEDSFL (72 aa)) is disordered. Positions 1040–1058 (SSQTSEESAIETGSSSSTF) are enriched in polar residues. The segment covering 1064 to 1088 (ETIEDIDMMDDIGIDSSDLVEDSFL) has biased composition (acidic residues).

This sequence belongs to the protein kinase superfamily. Tyr protein kinase family. CSF-1/PDGF receptor subfamily. Interacts with homodimeric PDGFA, PDGFB and PDGFC, and with heterodimers formed by PDGFA and PDGFB. Monomer in the absence of bound ligand. Interaction with dimeric PDGFA, PDGFB and/or PDGFC leads to receptor dimerization, where both PDGFRA homodimers and heterodimers with PDGFRB are observed. Interacts (tyrosine phosphorylated) with SHB (via SH2 domain). Interacts (tyrosine phosphorylated) with SHF (via SH2 domain). Interacts (tyrosine phosphorylated) with SRC (via SH2 domain). Interacts (tyrosine phosphorylated) with PIK3R1. Interacts (tyrosine phosphorylated) with PLCG1 (via SH2 domain). Interacts (tyrosine phosphorylated) with CRK, GRB2 and GRB7. Interacts with CD248; this interaction promotes PDGF receptor signaling pathway. Ubiquitinated, leading to its internalization and degradation. Post-translationally, autophosphorylated on tyrosine residues upon ligand binding. Autophosphorylation occurs in trans, i.e. one subunit of the dimeric receptor phosphorylates tyrosine residues on the other subunit. Phosphorylation at Tyr-730 and Tyr-741 is important for interaction with PIK3R1. Phosphorylation at Tyr-719 and Tyr-753 is important for interaction with PTPN11. Phosphorylation at Tyr-761 is important for interaction with CRK. Phosphorylation at Tyr-571 and Tyr-573 is important for interaction with SRC and SRC family members. Phosphorylation at Tyr-987 and Tyr-1017 is important for interaction with PLCG1.

The protein resides in the cell membrane. The protein localises to the cell projection. Its subcellular location is the cilium. It is found in the golgi apparatus. It catalyses the reaction L-tyrosyl-[protein] + ATP = O-phospho-L-tyrosyl-[protein] + ADP + H(+). Its activity is regulated as follows. Present in an inactive conformation in the absence of bound ligand. Binding of PDGFA and/or PDGFB leads to dimerization and activation by autophosphorylation on tyrosine residues. Inhibited by imatinib, nilotinib and sorafenib. In terms of biological role, tyrosine-protein kinase that acts as a cell-surface receptor for PDGFA, PDGFB and PDGFC and plays an essential role in the regulation of embryonic development, cell proliferation, survival and chemotaxis. Depending on the context, promotes or inhibits cell proliferation and cell migration. Plays an important role in the differentiation of bone marrow-derived mesenchymal stem cells. Required for normal skeleton development and cephalic closure during embryonic development. Required for normal development of the mucosa lining the gastrointestinal tract, and for recruitment of mesenchymal cells and normal development of intestinal villi. Plays a role in cell migration and chemotaxis in wound healing. Plays a role in platelet activation, secretion of agonists from platelet granules, and in thrombin-induced platelet aggregation. Binding of its cognate ligands - homodimeric PDGFA, homodimeric PDGFB, heterodimers formed by PDGFA and PDGFB or homodimeric PDGFC -leads to the activation of several signaling cascades; the response depends on the nature of the bound ligand and is modulated by the formation of heterodimers between PDGFRA and PDGFRB. Phosphorylates PIK3R1, PLCG1, and PTPN11. Activation of PLCG1 leads to the production of the cellular signaling molecules diacylglycerol and inositol 1,4,5-trisphosphate, mobilization of cytosolic Ca(2+) and the activation of protein kinase C. Phosphorylates PIK3R1, the regulatory subunit of phosphatidylinositol 3-kinase, and thereby mediates activation of the AKT1 signaling pathway. Mediates activation of HRAS and of the MAP kinases MAPK1/ERK2 and/or MAPK3/ERK1. Promotes activation of STAT family members STAT1, STAT3 and STAT5A and/or STAT5B. Receptor signaling is down-regulated by protein phosphatases that dephosphorylate the receptor and its down-stream effectors, and by rapid internalization of the activated receptor. The polypeptide is Platelet-derived growth factor receptor alpha (Pdgfra) (Rattus norvegicus (Rat)).